A 288-amino-acid chain; its full sequence is Acidic endochitinase SP2 (288 aa).

An N-terminal signal peptide occupies residues Met-1–Ala-27. Residue Gln-28 is modified to Pyrrolidone carboxylic acid. Residues Gln-28 to Gly-63 form the Chitin-binding type-1 domain. Disulfide bonds link Cys-30-Cys-38, Cys-32-Cys-44, Cys-37-Cys-51, and Cys-56-Cys-61. Over residues Gly-64–Pro-78 the composition is skewed to low complexity. The tract at residues Gly-64–Gly-84 is disordered. Residues Gly-64–Ser-85 are hinge region (Gly/Pro/Thr-rich). 4-hydroxyproline is present on residues Pro-66, Pro-69, Pro-72, and Pro-75. Repeat copies occupy residues Thr-67 to Pro-69, Thr-70 to Pro-72, Thr-73 to Pro-75, and Thr-76 to Pro-78. The interval Thr-67–Pro-78 is 4 X 3 AA tandem repeats of T-T-P. Residues Ser-86–Cys-288 form a catalytic region. 3 cysteine pairs are disulfide-bonded: Cys-107/Cys-154, Cys-168/Cys-178, and Cys-256/Cys-288. Glu-149 acts as the Proton donor in catalysis.

Belongs to the glycosyl hydrolase 19 family. Chitinase class I subfamily. In terms of processing, O-glycosylated on hydroxyprolines; contains xylose. Localized to infected area.

Its subcellular location is the secreted. The protein resides in the extracellular space. The enzyme catalyses Random endo-hydrolysis of N-acetyl-beta-D-glucosaminide (1-&gt;4)-beta-linkages in chitin and chitodextrins.. Defense against chitin-containing fungal pathogens. This chain is Acidic endochitinase SP2 (SP2), found in Beta vulgaris (Sugar beet).